The primary structure comprises 477 residues: Stromelysin-1 (477 aa).

The first 17 residues, 1–17 (MKNLPILLLLCVAACSA), serve as a signal peptide directing secretion. Residues 18 to 99 (YPLDRSARDE…SRCGVPDVGH (82 aa)) constitute a propeptide, activation peptide. The Cysteine switch signature appears at 90-97 (SRCGVPDV). Zn(2+) is bound at residue Cys-92. Asn-120 is a glycosylation site (N-linked (GlcNAc...) asparagine). Ca(2+)-binding residues include Asp-124 and Asp-158. Positions 168 and 170 each coordinate Zn(2+). Asp-175, Gly-176, Gly-178, and Val-180 together coordinate Ca(2+). Residue His-183 participates in Zn(2+) binding. Residues Gly-190, Asn-192, and Asp-194 each coordinate Ca(2+). Residue His-196 participates in Zn(2+) binding. Positions 198, 199, and 201 each coordinate Ca(2+). His-218 contributes to the Zn(2+) binding site. Residue Glu-219 is part of the active site. Residues His-222 and His-228 each coordinate Zn(2+). Residues 260–285 (QSLYGPPPASPDSPVEPSEPEPPAPG) are disordered. Hemopexin repeat units lie at residues 287–336 (LAMC…WPSL), 337–383 (PSGI…GFPP), 385–433 (VRKI…FPGI), and 434–477 (DSKL…WFNC). Cys-290 and Cys-477 form a disulfide bridge. Asp-297 is a Ca(2+) binding site. Residues Asp-389 and Asp-438 each coordinate Ca(2+).

The protein belongs to the peptidase M10A family. Ca(2+) serves as cofactor. Requires Zn(2+) as cofactor.

It localises to the secreted. It is found in the extracellular space. The protein resides in the extracellular matrix. The enzyme catalyses Preferential cleavage where P1', P2' and P3' are hydrophobic residues.. Metalloproteinase with a rather broad substrate specificity that can degrade fibronectin, laminin, gelatins of type I, III, IV, and V; collagens III, IV, X, and IX, and cartilage proteoglycans. Activates different molecules including growth factors, plasminogen or other matrix metalloproteinases such as MMP9. Once released into the extracellular matrix (ECM), the inactive pro-enzyme is activated by the plasmin cascade signaling pathway. Also acts intracellularly. For example, in dopaminergic neurons, gets activated by the serine protease HTRA2 upon stress and plays a pivotal role in DA neuronal degeneration by mediating microglial activation and alpha-synuclein/SNCA cleavage. In addition, plays a role in immune response and possesses antiviral activity against various viruses. Mechanistically, translocates from the cytoplasm into the cell nucleus upon virus infection to influence NF-kappa-B activities. This Equus caballus (Horse) protein is Stromelysin-1 (MMP3).